Here is a 97-residue protein sequence, read N- to C-terminus: Ice-structuring protein (97 aa).

The first 23 residues, 1-23 (MALSLFTVGQLIFLFWTLRITEA), serve as a signal peptide directing secretion. A propeptide spans 24–48 (NPDPAAKAAPAAVADPAAAAAAAVA) (removed by a dipeptidylpeptidase).

The protein belongs to the type-I AFP family. In terms of tissue distribution, detected in blood serum (at protein level).

Its subcellular location is the secreted. Contributes to protect fish blood from freezing at subzero sea water temperatures. Lowers the blood freezing point. Binds to nascent ice crystals and prevents further growth. This is Ice-structuring protein from Myzopsetta ferruginea (Yellowtail flounder).